A 100-amino-acid chain; its full sequence is Small ribosomal subunit protein uS14c (100 aa).

The protein belongs to the universal ribosomal protein uS14 family. Part of the 30S ribosomal subunit.

Its subcellular location is the plastid. The protein resides in the chloroplast. In terms of biological role, binds 16S rRNA, required for the assembly of 30S particles. The polypeptide is Small ribosomal subunit protein uS14c (Olimarabidopsis pumila (Dwarf rocket)).